Consider the following 1005-residue polypeptide: Protein TIC 214 (1005 aa).

6 helical membrane passes run 25–45 (VGLY…LFLL), 67–87 (FFTG…HLAL), 91–111 (HTIL…SNSG), 131–151 (SFQL…SVLG), 177–197 (FVGW…VFVW), and 304–324 (LFSI…PLLY). 2 disordered regions span residues 457-481 (VEEG…EREE) and 767-833 (KKKK…KRKQ). Basic residues predominate over residues 783-810 (KQKKVKSKQKKVKSKQKKVKSKQKKVKS). Residues 811–824 (KQNEIKSKQNEIKS) are compositionally biased toward basic and acidic residues.

The protein belongs to the TIC214 family. In terms of assembly, part of the Tic complex.

Its subcellular location is the plastid. It localises to the chloroplast inner membrane. In terms of biological role, involved in protein precursor import into chloroplasts. May be part of an intermediate translocation complex acting as a protein-conducting channel at the inner envelope. The polypeptide is Protein TIC 214 (Oenothera berteroana (Bertero's evening primrose)).